The chain runs to 292 residues: Ribosomal protein L11 methyltransferase (292 aa).

S-adenosyl-L-methionine is bound by residues Thr-138, Gly-159, Asp-181, and Asn-225.

Belongs to the methyltransferase superfamily. PrmA family.

It is found in the cytoplasm. It catalyses the reaction L-lysyl-[protein] + 3 S-adenosyl-L-methionine = N(6),N(6),N(6)-trimethyl-L-lysyl-[protein] + 3 S-adenosyl-L-homocysteine + 3 H(+). Methylates ribosomal protein L11. This Leuconostoc citreum (strain KM20) protein is Ribosomal protein L11 methyltransferase.